The sequence spans 277 residues: Digeranylgeranylglyceryl phosphate synthase (277 aa).

The next 8 membrane-spanning stretches (helical) occupy residues Leu16–Leu36, Ile40–Phe60, Ala83–Trp105, Phe107–Leu124, Gly146–Val166, Val202–Ile222, Leu224–Leu244, and Gln256–Val276.

It belongs to the UbiA prenyltransferase family. DGGGP synthase subfamily. The cofactor is Mg(2+).

It localises to the cell membrane. It carries out the reaction sn-3-O-(geranylgeranyl)glycerol 1-phosphate + (2E,6E,10E)-geranylgeranyl diphosphate = 2,3-bis-O-(geranylgeranyl)-sn-glycerol 1-phosphate + diphosphate. It participates in membrane lipid metabolism; glycerophospholipid metabolism. In terms of biological role, prenyltransferase that catalyzes the transfer of the geranylgeranyl moiety of geranylgeranyl diphosphate (GGPP) to the C2 hydroxyl of (S)-3-O-geranylgeranylglyceryl phosphate (GGGP). This reaction is the second ether-bond-formation step in the biosynthesis of archaeal membrane lipids. This is Digeranylgeranylglyceryl phosphate synthase from Thermococcus kodakarensis (strain ATCC BAA-918 / JCM 12380 / KOD1) (Pyrococcus kodakaraensis (strain KOD1)).